Consider the following 356-residue polypeptide: ADP-ribosylhydrolase ARH3 (356 aa).

Mg(2+) contacts are provided by aspartate 26, glutamate 33, threonine 62, aspartate 63, and aspartate 64. Aspartate 63 provides a ligand contact to substrate. Substrate contacts are provided by residues 132–138 (KGSYGNG), histidine 168, and isoleucine 260. Aspartate 303, aspartate 305, and threonine 306 together coordinate Mg(2+).

The protein belongs to the ADP-ribosylglycohydrolase family. As to quaternary structure, monomer. It depends on Mg(2+) as a cofactor. The cofactor is Mn(2+).

Its subcellular location is the nucleus. It localises to the cytoplasm. The protein localises to the chromosome. The protein resides in the mitochondrion matrix. The enzyme catalyses [(1''-&gt;2')-ADP-alpha-D-ribose](n) + H2O = [(1''-&gt;2')-ADP-alpha-D-ribose](n-1) + ADP-D-ribose. It catalyses the reaction 1''-O-acetyl-ADP-alpha-D-ribose + H2O = ADP-D-ribose + acetate + H(+). The catalysed reaction is O-(ADP-D-ribosyl)-L-seryl-[protein] + H2O = ADP-D-ribose + L-seryl-[protein]. It carries out the reaction alpha-NAD(+) + H2O = ADP-D-ribose + nicotinamide + H(+). The protein undergoes a dramatic conformational switch from closed to open states upon substrate-binding, which enables specific substrate recognition for the 1''-O-linkage. The glutamate flap (Glu-33) blocks substrate entrance to Mg(2+) in the unliganded closed state. In presence of substrate, Glu-33 is ejected from the active site: this closed-to-open transition significantly widens the substrate-binding channel and precisely positions the scissile 1''-O-linkage for cleavage while securing tightly 2'- and 3'-hydroxyls of ADP-ribose. Activity is inhibited by calcium. Functionally, ADP-ribosylhydrolase that preferentially hydrolyzes the scissile alpha-O-linkage attached to the anomeric C1'' position of ADP-ribose and acts on different substrates, such as proteins ADP-ribosylated on serine and threonine, free poly(ADP-ribose) and O-acetyl-ADP-D-ribose. Specifically acts as a serine mono-ADP-ribosylhydrolase by mediating the removal of mono-ADP-ribose attached to serine residues on proteins, thereby playing a key role in DNA damage response. Serine ADP-ribosylation of proteins constitutes the primary form of ADP-ribosylation of proteins in response to DNA damage. Does not hydrolyze ADP-ribosyl-arginine, -cysteine, -diphthamide, or -asparagine bonds. Also able to degrade protein free poly(ADP-ribose), which is synthesized in response to DNA damage: free poly(ADP-ribose) acts as a potent cell death signal and its degradation by ADPRHL2 protects cells from poly(ADP-ribose)-dependent cell death, a process named parthanatos. Also hydrolyzes free poly(ADP-ribose) in mitochondria. Specifically digests O-acetyl-ADP-D-ribose, a product of deacetylation reactions catalyzed by sirtuins. Specifically degrades 1''-O-acetyl-ADP-D-ribose isomer, rather than 2''-O-acetyl-ADP-D-ribose or 3''-O-acetyl-ADP-D-ribose isomers. The sequence is that of ADP-ribosylhydrolase ARH3 (adprs) from Latimeria chalumnae (Coelacanth).